We begin with the raw amino-acid sequence, 30 residues long: Ornithine carbamoyltransferase, catabolic (30 aa).

Belongs to the aspartate/ornithine carbamoyltransferase superfamily. OTCase family.

Its subcellular location is the cytoplasm. The catalysed reaction is carbamoyl phosphate + L-ornithine = L-citrulline + phosphate + H(+). Its pathway is amino-acid degradation; L-arginine degradation via ADI pathway; carbamoyl phosphate from L-arginine: step 2/2. This chain is Ornithine carbamoyltransferase, catabolic (arcB), found in Aeromonas caviae (Aeromonas punctata).